Here is a 238-residue protein sequence, read N- to C-terminus: LexA repressor (238 aa).

Residues 26-46 (FDEMKDALDLASKSGIHRLIT) constitute a DNA-binding region (H-T-H motif). Catalysis depends on for autocatalytic cleavage activity residues serine 158 and lysine 196.

The protein belongs to the peptidase S24 family. Homodimer.

The enzyme catalyses Hydrolysis of Ala-|-Gly bond in repressor LexA.. Represses a number of genes involved in the response to DNA damage (SOS response), including recA and lexA. In the presence of single-stranded DNA, RecA interacts with LexA causing an autocatalytic cleavage which disrupts the DNA-binding part of LexA, leading to derepression of the SOS regulon and eventually DNA repair. The chain is LexA repressor from Rhizobium meliloti (strain 1021) (Ensifer meliloti).